Reading from the N-terminus, the 156-residue chain is MNMNATLLGQAISFAMFVWFCMKYVWPPIMQAIEERQKKIADGLQAAERAAKDLDLAQANASSQLKEAKRTATEIIEQANKRKAQILDEAREDAQTERQKILAQAEAQLEAERNRARDELRKQVATLAVAGAEKILERSIDKDAHKDILDNITAKL.

A helical membrane pass occupies residues 7-29; it reads LLGQAISFAMFVWFCMKYVWPPI.

Belongs to the ATPase B chain family. F-type ATPases have 2 components, F(1) - the catalytic core - and F(0) - the membrane proton channel. F(1) has five subunits: alpha(3), beta(3), gamma(1), delta(1), epsilon(1). F(0) has three main subunits: a(1), b(2) and c(10-14). The alpha and beta chains form an alternating ring which encloses part of the gamma chain. F(1) is attached to F(0) by a central stalk formed by the gamma and epsilon chains, while a peripheral stalk is formed by the delta and b chains.

Its subcellular location is the cell inner membrane. Its function is as follows. F(1)F(0) ATP synthase produces ATP from ADP in the presence of a proton or sodium gradient. F-type ATPases consist of two structural domains, F(1) containing the extramembraneous catalytic core and F(0) containing the membrane proton channel, linked together by a central stalk and a peripheral stalk. During catalysis, ATP synthesis in the catalytic domain of F(1) is coupled via a rotary mechanism of the central stalk subunits to proton translocation. Functionally, component of the F(0) channel, it forms part of the peripheral stalk, linking F(1) to F(0). The sequence is that of ATP synthase subunit b from Vibrio vulnificus (strain CMCP6).